Reading from the N-terminus, the 334-residue chain is Ornithine carbamoyltransferase (334 aa).

Carbamoyl phosphate is bound by residues Ser-57 to Thr-60, Gln-84, Arg-108, and His-135 to Gln-138. L-ornithine-binding positions include Asn-169, Asp-233, and Ser-237 to Met-238. Carbamoyl phosphate-binding positions include Cys-275–Leu-276 and Arg-320.

The protein belongs to the aspartate/ornithine carbamoyltransferase superfamily. OTCase family.

The protein resides in the cytoplasm. It catalyses the reaction carbamoyl phosphate + L-ornithine = L-citrulline + phosphate + H(+). It participates in amino-acid biosynthesis; L-arginine biosynthesis; L-arginine from L-ornithine and carbamoyl phosphate: step 1/3. Its function is as follows. Reversibly catalyzes the transfer of the carbamoyl group from carbamoyl phosphate (CP) to the N(epsilon) atom of ornithine (ORN) to produce L-citrulline. The sequence is that of Ornithine carbamoyltransferase from Aeromonas hydrophila subsp. hydrophila (strain ATCC 7966 / DSM 30187 / BCRC 13018 / CCUG 14551 / JCM 1027 / KCTC 2358 / NCIMB 9240 / NCTC 8049).